A 374-amino-acid chain; its full sequence is Protein dip1 (374 aa).

It belongs to the LDB17 family.

It is found in the cytoplasm. The protein resides in the nucleus. The protein localises to the cell tip. Functionally, may be involved in protein-linked oligosaccharide phosphorylation. The polypeptide is Protein dip1 (dip1) (Schizosaccharomyces pombe (strain 972 / ATCC 24843) (Fission yeast)).